We begin with the raw amino-acid sequence, 644 residues long: Cell pattern formation-associated protein StuA (644 aa).

The segment covering 18–33 (ATAHAPASAAPSGISH) has biased composition (low complexity). Disordered stretches follow at residues 18-58 (ATAH…PGYP) and 86-120 (QLPAMSSSGPSPSLSGAQSYAPHSFDHTGQVAPPG). Residues 38-47 (PQSSMMQPGQ) are compositionally biased toward polar residues. Residues 87–104 (LPAMSSSGPSPSLSGAQS) show a composition bias toward low complexity. The HTH APSES-type domain occupies 124 to 230 (RVTATLWEDE…HDIGALLYHP (107 aa)). The H-T-H motif DNA-binding region spans 158-179 (GTKLLNVAGMTRGRRDGILKSE). A disordered region spans residues 239 to 644 (GSAAMAAVDR…HTMTAQRARR (406 aa)). Positions 253-269 (SMQTQRYISGPTTSQPP) are enriched in polar residues. Positions 315–328 (SASSIMGMSNSGSS) are enriched in low complexity. 3 stretches are compositionally biased toward polar residues: residues 334 to 357 (ANVQTPQGSQPLSIDTGLSNTRSV), 371 to 383 (QAISYGSNQSYDN), and 395 to 404 (PGQYNTQGQS). A compositionally biased stretch (basic and acidic residues) spans 456 to 465 (EGDHEHDNEY). Positions 509 to 524 (GSGRATPRTTTTSQTQ) are enriched in low complexity. Residues 525–544 (WNSGYPTPQRQGPPSSNLYN) are compositionally biased toward polar residues. Residues 584–612 (KRGRDDDDEDPYRPDSVQSDDMGGLKRRK) are nuclear localization domain. Positions 635-644 (HTMTAQRARR) are enriched in polar residues.

Belongs to the EFG1/PHD1/stuA family.

It localises to the nucleus. Functionally, transcription factor that regulates asexual reproduction. Binds the StuA-response elements (StRE) with the consensus sequence 5'-(A/T)CGCG(T/A)N(A/C)-3' at the promoters of target genes. Required for pathogenicity and positively regulates the synthesis of the mycotoxin alternariol. Acts as a positive regulator of Tox3 but is not required for the expression of ToxA. Also acts as a central regulator of carbon metabolism including glycolysis, the TCA cycle, and amino acid synthesis. This Phaeosphaeria nodorum (strain SN15 / ATCC MYA-4574 / FGSC 10173) (Glume blotch fungus) protein is Cell pattern formation-associated protein StuA.